The chain runs to 83 residues: Small ribosomal subunit protein bS20 (83 aa).

It belongs to the bacterial ribosomal protein bS20 family.

Functionally, binds directly to 16S ribosomal RNA. This Lactobacillus delbrueckii subsp. bulgaricus (strain ATCC 11842 / DSM 20081 / BCRC 10696 / JCM 1002 / NBRC 13953 / NCIMB 11778 / NCTC 12712 / WDCM 00102 / Lb 14) protein is Small ribosomal subunit protein bS20.